Here is an 89-residue protein sequence, read N- to C-terminus: Small ribosomal subunit protein uS15 (89 aa).

Belongs to the universal ribosomal protein uS15 family. In terms of assembly, part of the 30S ribosomal subunit. Forms a bridge to the 50S subunit in the 70S ribosome, contacting the 23S rRNA.

Functionally, one of the primary rRNA binding proteins, it binds directly to 16S rRNA where it helps nucleate assembly of the platform of the 30S subunit by binding and bridging several RNA helices of the 16S rRNA. In terms of biological role, forms an intersubunit bridge (bridge B4) with the 23S rRNA of the 50S subunit in the ribosome. The sequence is that of Small ribosomal subunit protein uS15 from Salinispora arenicola (strain CNS-205).